The chain runs to 306 residues: Aspartate carbamoyltransferase catalytic subunit (306 aa).

2 residues coordinate carbamoyl phosphate: arginine 55 and threonine 56. Lysine 84 serves as a coordination point for L-aspartate. Arginine 105, histidine 133, and glutamine 136 together coordinate carbamoyl phosphate. L-aspartate-binding residues include arginine 166 and arginine 227. Leucine 265 and proline 266 together coordinate carbamoyl phosphate.

It belongs to the aspartate/ornithine carbamoyltransferase superfamily. ATCase family. Heterododecamer (2C3:3R2) of six catalytic PyrB chains organized as two trimers (C3), and six regulatory PyrI chains organized as three dimers (R2).

The enzyme catalyses carbamoyl phosphate + L-aspartate = N-carbamoyl-L-aspartate + phosphate + H(+). Its pathway is pyrimidine metabolism; UMP biosynthesis via de novo pathway; (S)-dihydroorotate from bicarbonate: step 2/3. Its function is as follows. Catalyzes the condensation of carbamoyl phosphate and aspartate to form carbamoyl aspartate and inorganic phosphate, the committed step in the de novo pyrimidine nucleotide biosynthesis pathway. The sequence is that of Aspartate carbamoyltransferase catalytic subunit from Neisseria meningitidis serogroup A / serotype 4A (strain DSM 15465 / Z2491).